The following is a 198-amino-acid chain: T-cell surface glycoprotein CD3 epsilon chain (198 aa).

The signal sequence occupies residues 1-21; the sequence is MQSGTRWRVLGLCLLSIGVWG. Residues 22–117 are Extracellular-facing; the sequence is QDGNEEMGSI…RVCENCMEMD (96 aa). The 71-residue stretch at 37–107 folds into the Ig-like domain; the sequence is QVSISGTTVI…DASHHLYLKA (71 aa). Cysteine 49 and cysteine 89 are oxidised to a cystine. Residues 118-138 form a helical membrane-spanning segment; that stretch reads VMAVATIVIVDICITLGLLLL. The Cytoplasmic segment spans residues 139-198; the sequence is VYYWSKNRKAKAKPVTRGAGAGGRQRGQNKERPPPVPNPDYEPIRKGQQDLYSGLNQRRI. The segment at 152-198 is disordered; sequence PVTRGAGAGGRQRGQNKERPPPVPNPDYEPIRKGQQDLYSGLNQRRI. An NUMB-binding region region spans residues 166–183; sequence QNKERPPPVPNPDYEPIR. In terms of domain architecture, ITAM spans 169–196; the sequence is ERPPPVPNPDYEPIRKGQQDLYSGLNQR. The proline-rich sequence stretch occupies residues 170–177; the sequence is RPPPVPNP. 2 positions are modified to phosphotyrosine: tyrosine 179 and tyrosine 190. Positions 188–198 are enriched in polar residues; the sequence is DLYSGLNQRRI.

As to quaternary structure, the TCR-CD3 complex is composed of a CD3D/CD3E and a CD3G/CD3E heterodimers that preferentially associate with TCRalpha and TCRbeta, respectively, to form TCRalpha/CD3E/CD3G and TCRbeta/CD3G/CD3E trimers. In turn, the hexamer interacts with CD3Z homodimer to form the TCR-CD3 complex. Alternatively, TCRalpha and TCRbeta can be replaced by TCRgamma and TCRdelta. Interacts with CD6. Interacts (via Proline-rich sequence) with NCK1; the interaction is ligand dependent but independent of tyrosine kinase activation. Post-translationally, phosphorylated on Tyr residues after T-cell receptor triggering by LCK in association with CD4/CD8.

The protein localises to the cell membrane. Part of the TCR-CD3 complex present on T-lymphocyte cell surface that plays an essential role in adaptive immune response. When antigen presenting cells (APCs) activate T-cell receptor (TCR), TCR-mediated signals are transmitted across the cell membrane by the CD3 chains CD3D, CD3E, CD3G and CD3Z. All CD3 chains contain immunoreceptor tyrosine-based activation motifs (ITAMs) in their cytoplasmic domain. Upon TCR engagement, these motifs become phosphorylated by Src family protein tyrosine kinases LCK and FYN, resulting in the activation of downstream signaling pathways. In addition of this role of signal transduction in T-cell activation, CD3E plays an essential role in correct T-cell development. Also participates in internalization and cell surface down-regulation of TCR-CD3 complexes via endocytosis sequences present in CD3E cytosolic region. In addition to its role as a TCR coreceptor, it serves as a receptor for ITPRIPL1. Ligand recognition inhibits T-cell activation by promoting interaction with NCK1, which prevents CD3E-ZAP70 interaction and blocks the ERK-NFkB signaling cascade and calcium influx. This is T-cell surface glycoprotein CD3 epsilon chain (CD3E) from Macaca fascicularis (Crab-eating macaque).